The sequence spans 363 residues: 4-hydroxy-2-oxovalerate aldolase 1 (363 aa).

Residues 13–265 (VRMTDTSLRD…KTGIDFFDIA (253 aa)) enclose the Pyruvate carboxyltransferase domain. 21–22 (RD) provides a ligand contact to substrate. D22 provides a ligand contact to Mn(2+). Residue H25 is the Proton acceptor of the active site. Residues S175 and H204 each coordinate substrate. Positions 204 and 206 each coordinate Mn(2+). Residue Y295 coordinates substrate.

This sequence belongs to the 4-hydroxy-2-oxovalerate aldolase family.

The enzyme catalyses (S)-4-hydroxy-2-oxopentanoate = acetaldehyde + pyruvate. This chain is 4-hydroxy-2-oxovalerate aldolase 1, found in Mycobacterium sp. (strain JLS).